A 71-amino-acid polypeptide reads, in one-letter code: Small ribosomal subunit protein bS21 (71 aa).

This sequence belongs to the bacterial ribosomal protein bS21 family.

In Blochmanniella floridana, this protein is Small ribosomal subunit protein bS21.